The chain runs to 492 residues: Glutamyl-tRNA(Gln) amidotransferase subunit A, mitochondrial (492 aa).

Residues Lys-78 and Ser-159 each act as charge relay system in the active site. Ser-183 functions as the Acyl-ester intermediate in the catalytic mechanism.

It belongs to the amidase family. GatA subfamily. Subunit of the heterotrimeric GatCAB amidotransferase (AdT) complex, composed of A, B and C subunits.

The protein resides in the mitochondrion. It catalyses the reaction L-glutamyl-tRNA(Gln) + L-glutamine + ATP + H2O = L-glutaminyl-tRNA(Gln) + L-glutamate + ADP + phosphate + H(+). Its function is as follows. Allows the formation of correctly charged Gln-tRNA(Gln) through the transamidation of misacylated Glu-tRNA(Gln) in the mitochondria. The reaction takes place in the presence of glutamine and ATP through an activated gamma-phospho-Glu-tRNA(Gln). The polypeptide is Glutamyl-tRNA(Gln) amidotransferase subunit A, mitochondrial (Anopheles gambiae (African malaria mosquito)).